A 488-amino-acid polypeptide reads, in one-letter code: UDP-N-acetylmuramoyl-L-alanyl-D-glutamate--2,6-diaminopimelate ligase (488 aa).

Residues Leu-24, Ser-26, and 41 to 43 contribute to the UDP-N-acetyl-alpha-D-muramoyl-L-alanyl-D-glutamate site; that span reads HQV. 113 to 119 provides a ligand contact to ATP; it reads GTNGKTT. UDP-N-acetyl-alpha-D-muramoyl-L-alanyl-D-glutamate is bound by residues Asn-154, 155 to 156, Ser-182, Gln-188, and Arg-190; that span reads TT. Residue Lys-222 is modified to N6-carboxylysine. Residues Arg-386, 410–413, Gly-461, and Glu-465 contribute to the meso-2,6-diaminopimelate site; that span reads DNPR. The short motif at 410–413 is the Meso-diaminopimelate recognition motif element; that stretch reads DNPR.

The protein belongs to the MurCDEF family. MurE subfamily. Mg(2+) serves as cofactor. Carboxylation is probably crucial for Mg(2+) binding and, consequently, for the gamma-phosphate positioning of ATP.

The protein resides in the cytoplasm. The catalysed reaction is UDP-N-acetyl-alpha-D-muramoyl-L-alanyl-D-glutamate + meso-2,6-diaminopimelate + ATP = UDP-N-acetyl-alpha-D-muramoyl-L-alanyl-gamma-D-glutamyl-meso-2,6-diaminopimelate + ADP + phosphate + H(+). Its pathway is cell wall biogenesis; peptidoglycan biosynthesis. In terms of biological role, catalyzes the addition of meso-diaminopimelic acid to the nucleotide precursor UDP-N-acetylmuramoyl-L-alanyl-D-glutamate (UMAG) in the biosynthesis of bacterial cell-wall peptidoglycan. The chain is UDP-N-acetylmuramoyl-L-alanyl-D-glutamate--2,6-diaminopimelate ligase from Haemophilus influenzae (strain PittEE).